We begin with the raw amino-acid sequence, 116 residues long: SPbeta prophage-derived uncharacterized protein YoqA (116 aa).

The protein is SPbeta prophage-derived uncharacterized protein YoqA (yoqA) of Bacillus subtilis (strain 168).